Consider the following 432-residue polypeptide: MTTEIMQISLSHNPADARWGEKALISTNDQGVTIHLTSHDQLGGIQRAARKIDGQGIKQVKLAGEGWGLEQSWAFWQGFRGPKGQRSVVWAELPANEKTELEQRLQIIDWVRDTINAPAEDLGPEQLAKNAIDLLCAVSCDAVSYRITKGEDLREQNYAGIYTVGRGSDRAPVLLALDYNPTGNPDAPVMACLVGKGITFDSGGYSLKQSAFMDSMKSDMGGAATLTGALALAAARGLKERVKLYLCCADNMVSGNAFKLGDIIRYRNGKTVEIMNTDAEGRLVLADGLIDASEQNAPLIIDAATLTGAAKTALGNDYHALFSFDDELAQALLTSAHSEHELFWRLPLAEFHRSQLPSNFAELNNVAGGAYSAGASTAAAFLSHFVKNYQQGWLHIDCSATYRKSAVDQWSAGATGLGVRTVANLLLAQAKQ.

Mn(2+) contacts are provided by K196 and D201. Residue K208 is part of the active site. Mn(2+)-binding residues include D219, D278, and E280. R282 is a catalytic residue.

Belongs to the peptidase M17 family. Homohexamer. It depends on Mn(2+) as a cofactor.

The protein localises to the cytoplasm. It catalyses the reaction Release of an N-terminal amino acid, Xaa, from a peptide or arylamide. Xaa is preferably Glu or Asp but may be other amino acids, including Leu, Met, His, Cys and Gln.. In terms of biological role, probably plays an important role in intracellular peptide degradation. This is Peptidase B from Yersinia pseudotuberculosis serotype O:1b (strain IP 31758).